Consider the following 590-residue polypeptide: Glypican-3 (590 aa).

The signal sequence occupies residues 1-25 (MMPGLKLYGALILCVLVLPFSRPSS). Cystine bridges form between cysteine 30–cysteine 67, cysteine 60–cysteine 255, cysteine 68–cysteine 258, cysteine 190–cysteine 342, cysteine 245–cysteine 278, cysteine 267–cysteine 418, and cysteine 271–cysteine 406. 2 N-linked (GlcNAc...) asparagine glycosylation sites follow: asparagine 119 and asparagine 234. A glycan (N-linked (GlcNAc...) asparagine) is linked at asparagine 414. Disordered regions lie at residues 429–450 (PGPGLKRVHPHGSESKQKTPEP) and 476–520 (WRAR…SGLG). Positions 495–513 (TDEDEEGLESGDCDDEDEC) are enriched in acidic residues. Serine 504 and serine 517 each carry an O-linked (Xyl...) (glycosaminoglycan) serine glycan.

Belongs to the glypican family. As to quaternary structure, heterodimer; disulfide-linked. Cleavage by a furin-like convertase results in production of alpha and beta chains which form a disulfide-linked heterodimer. O-glycosylated; contains heparan sulfate and/or chondroitin sulfate. Post-translationally, cleaved intracellularly by a furin-like convertase to generate 2 subunits, alpha and beta, which remain associated through disulfide bonds and are associated with the cell surface via the GPI-anchor. This processing is essential for its role in inhibition of hedgehog signaling. A second proteolytic event may result in cleavage of the protein on the cell surface, separating it from the GPI-anchor and leading to its shedding from the cell surface. Maternally expressed and is almost ubiquitous during blastula and gastrula stages but becomes restricted to the prospective hindbrain by 24 hours post-fertilization.

It is found in the cell membrane. Its function is as follows. Cell surface proteoglycan. Negatively regulates the hedgehog signaling pathway. Positively regulates the canonical and non-canonical Wnt signaling pathways. Binds to CD81 which decreases the availability of free CD81 for binding to the transcriptional repressor HHEX, resulting in nuclear translocation of HHEX and transcriptional repression. Inhibits the dipeptidyl peptidase activity of DPP4. Plays a role in limb patterning and skeletal development. Modulates the effects of growth factors on renal branching morphogenesis. Required for coronary vascular development. Plays a role in regulating cell movements during gastrulation. The protein is Glypican-3 of Danio rerio (Zebrafish).